The primary structure comprises 156 residues: Peptidyl-prolyl cis-trans isomerase cypE (156 aa).

One can recognise a PPIase cyclophilin-type domain in the interval 2–155; it reads TEQTVTLQTT…DEIRIIKATA (154 aa).

It belongs to the cyclophilin-type PPIase family. In terms of assembly, interacts with snwA.

It is found in the cytoplasm. The protein localises to the nucleus. The enzyme catalyses [protein]-peptidylproline (omega=180) = [protein]-peptidylproline (omega=0). Catalyzes the cis-trans isomerization of proline imidic peptide bonds in oligopeptides. Plays a role in protein folding, transport and assembly. This chain is Peptidyl-prolyl cis-trans isomerase cypE (cypE), found in Dictyostelium discoideum (Social amoeba).